A 399-amino-acid polypeptide reads, in one-letter code: V-set and immunoglobulin domain-containing protein 4 (399 aa).

A signal peptide spans 1 to 19 (MGILLGLLLLGHLTVDTYG). Residues 20 to 283 (RPILEVPESV…TSAGPGKSLP (264 aa)) lie on the Extracellular side of the membrane. 2 consecutive Ig-like domains span residues 21 to 131 (PILE…DKIT) and 143 to 226 (PTVT…SDIV). 2 disulfides stabilise this stretch: Cys-41/Cys-113 and Cys-165/Cys-211. A helical transmembrane segment spans residues 284–304 (VFAIILIISLCCMVVFTMAYI). Topologically, residues 305–399 (MLCRKTSQQE…FLATEGKSVC (95 aa)) are cytoplasmic.

As to expression, abundantly expressed in several fetal tissues. In adult tissues, highest expression in lung and placenta. Expressed in resting macrophages.

Its subcellular location is the membrane. In terms of biological role, phagocytic receptor, strong negative regulator of T-cell proliferation and IL2 production. Potent inhibitor of the alternative complement pathway convertases. This Homo sapiens (Human) protein is V-set and immunoglobulin domain-containing protein 4 (VSIG4).